The sequence spans 207 residues: Outer-membrane lipoprotein carrier protein (207 aa).

Residues M1–A21 form the signal peptide.

It belongs to the LolA family. In terms of assembly, monomer.

The protein resides in the periplasm. Its function is as follows. Participates in the translocation of lipoproteins from the inner membrane to the outer membrane. Only forms a complex with a lipoprotein if the residue after the N-terminal Cys is not an aspartate (The Asp acts as a targeting signal to indicate that the lipoprotein should stay in the inner membrane). The sequence is that of Outer-membrane lipoprotein carrier protein from Azotobacter vinelandii (strain DJ / ATCC BAA-1303).